A 286-amino-acid chain; its full sequence is Nucleotide-binding protein PLES_48441 (286 aa).

8 to 15 lines the ATP pocket; that stretch reads GRSGSGKS. 60-63 lines the GTP pocket; it reads DARN.

This sequence belongs to the RapZ-like family.

Displays ATPase and GTPase activities. This is Nucleotide-binding protein PLES_48441 from Pseudomonas aeruginosa (strain LESB58).